We begin with the raw amino-acid sequence, 279 residues long: Gas vesicle protein L2 (279 aa).

The protein belongs to the gas vesicle GvpF/GvpL family. As to quaternary structure, gvpF to GvpM interact with each other in vitro, and may form multi-subunit complex(es). Interacts with GvpC, GvpN and GvpO.

The protein localises to the gas vesicle. Its function is as follows. Proteins GvpF to GvpM might be involved in nucleating gas vesicle formation. A minor component of the gas vesicle. Gas vesicles are hollow, gas filled proteinaceous nanostructures found in several microbial planktonic microorganisms. They allow positioning of halobacteria at the optimal depth for growth in the poorly aerated, shallow brine pools of their habitat. Functionally, expression of 2 c-vac DNA fragments containing 2 divergently transcribed regions (gvpE-gvpF-gvpG-gvpH-gvpI-gvpJ-gvpK-gvpL-gvpM and gvpA-gvpC-gvpN-gvpO) allows H.volcanii to produce gas vesicles. This Halobacterium salinarum (strain ATCC 700922 / JCM 11081 / NRC-1) (Halobacterium halobium) protein is Gas vesicle protein L2.